The sequence spans 126 residues: Probable prefoldin subunit 4 (126 aa).

This sequence belongs to the prefoldin subunit beta family. In terms of assembly, heterohexamer of two PFD-alpha type and four PFD-beta type subunits.

In terms of biological role, binds specifically to cytosolic chaperonin (c-CPN) and transfers target proteins to it. Binds to nascent polypeptide chain and promotes folding in an environment in which there are many competing pathways for nonnative proteins. The polypeptide is Probable prefoldin subunit 4 (pfd-4) (Caenorhabditis elegans).